A 197-amino-acid chain; its full sequence is Probable GTP-binding protein EngB (197 aa).

An EngB-type G domain is found at 2–186; the sequence is KVKEVIFAGR…KRDLKQYLLS (185 aa). Residues 10–17, 35–39, 52–55, 132–135, and 166–168 contribute to the GTP site; these read GRSNVGKS, GTTIR, DLPG, NKMD, and VCA. Mg(2+) is bound by residues Ser17 and Thr37.

This sequence belongs to the TRAFAC class TrmE-Era-EngA-EngB-Septin-like GTPase superfamily. EngB GTPase family. The cofactor is Mg(2+).

Its function is as follows. Necessary for normal cell division and for the maintenance of normal septation. The protein is Probable GTP-binding protein EngB of Archaeoglobus fulgidus (strain ATCC 49558 / DSM 4304 / JCM 9628 / NBRC 100126 / VC-16).